The primary structure comprises 381 residues: Nitric oxide reductase FlRd-NAD(+) reductase (381 aa).

It belongs to the FAD-dependent oxidoreductase family. Requires FAD as cofactor.

Its subcellular location is the cytoplasm. The catalysed reaction is 2 reduced [nitric oxide reductase rubredoxin domain] + NAD(+) + H(+) = 2 oxidized [nitric oxide reductase rubredoxin domain] + NADH. The protein operates within nitrogen metabolism; nitric oxide reduction. One of at least two accessory proteins for anaerobic nitric oxide (NO) reductase. Reduces the rubredoxin moiety of NO reductase. This chain is Nitric oxide reductase FlRd-NAD(+) reductase, found in Aliivibrio fischeri (strain ATCC 700601 / ES114) (Vibrio fischeri).